The chain runs to 496 residues: NAD(P)H-quinone oxidoreductase subunit 2, chloroplastic (496 aa).

A run of 14 helical transmembrane segments spans residues 14-34 (SFLP…LDLV), 42-62 (MLVK…IQQW), 79-99 (FTTC…PLSF), 109-129 (LTEF…LSSA), 133-153 (ITIF…TGYV), 167-187 (LIIG…LYGL), 210-230 (LASW…LSLV), 244-264 (PTPV…ALTI), 281-301 (ILQI…MVET), 305-325 (RILT…IVAG), 334-354 (LVYM…IILF), 377-397 (ASCL…TGFF), 400-420 (ILLF…TGIF), and 469-489 (IYLC…VIYF).

It belongs to the complex I subunit 2 family. In terms of assembly, NDH is composed of at least 16 different subunits, 5 of which are encoded in the nucleus.

It is found in the plastid. It localises to the chloroplast thylakoid membrane. It carries out the reaction a plastoquinone + NADH + (n+1) H(+)(in) = a plastoquinol + NAD(+) + n H(+)(out). The enzyme catalyses a plastoquinone + NADPH + (n+1) H(+)(in) = a plastoquinol + NADP(+) + n H(+)(out). Functionally, NDH shuttles electrons from NAD(P)H:plastoquinone, via FMN and iron-sulfur (Fe-S) centers, to quinones in the photosynthetic chain and possibly in a chloroplast respiratory chain. The immediate electron acceptor for the enzyme in this species is believed to be plastoquinone. Couples the redox reaction to proton translocation, and thus conserves the redox energy in a proton gradient. In Chara vulgaris (Common stonewort), this protein is NAD(P)H-quinone oxidoreductase subunit 2, chloroplastic.